A 579-amino-acid polypeptide reads, in one-letter code: ATP-dependent RNA helicase SUV3, mitochondrial (579 aa).

A mitochondrion-targeting transit peptide spans 1 to 59 (MAVAAALLRRRALYSALASPSWLHDTSSCYICSISGTHSLVNHPNLRLQRGYHNSGKFD). Positions 72 to 213 (NAREKKRNVF…QRILEPTGDV (142 aa)) constitute a Helicase ATP-binding domain. An ATP-binding site is contributed by 85–92 (GPTNSGKT). The Helicase C-terminal domain maps to 214–388 (VTVQYYERLS…GLFPTFDVLS (175 aa)). An N-linked (GlcNAc...) asparagine glycan is attached at N309.

This sequence belongs to the helicase family. Homodimer; in free form. Component of the mitochondrial degradosome (mtEXO) complex which is a heteropentamer containing 2 copies of SUPV3L1 and 3 copies of PNPT1. Mg(2+) serves as cofactor. Mn(2+) is required as a cofactor.

The protein localises to the nucleus. The protein resides in the mitochondrion matrix. It localises to the mitochondrion nucleoid. The catalysed reaction is ATP + H2O = ADP + phosphate + H(+). Its function is as follows. Major helicase player in mitochondrial RNA metabolism. Component of the mitochondrial degradosome (mtEXO) complex, that degrades 3' overhang double-stranded RNA with a 3'-to-5' directionality in an ATP-dependent manner. ATPase and ATP-dependent multisubstrate helicase, able to unwind double-stranded (ds) DNA and RNA, and RNA/DNA heteroduplexes in the 5'-to-3' direction. Plays a role in the RNA surveillance system in mitochondria; regulates the stability of mature mRNAs, the removal of aberrantly formed mRNAs and the rapid degradation of non coding processing intermediates. Confers salinity and drought stress tolerances by maintaining both photosynthesis and antioxidant machinery, probably via an increase in plant hormones levels such as gibberellic acid (GA(3)), the cytokinin zeatin (Z) and indole-3-acetic acid (IAA). This is ATP-dependent RNA helicase SUV3, mitochondrial from Oryza sativa subsp. japonica (Rice).